We begin with the raw amino-acid sequence, 676 residues long: Beta-galactosidase BgaP (676 aa).

Arg-112 contributes to the substrate binding site. Cys-116 is a Zn(2+) binding site. Asn-150 is a substrate binding site. Glu-151 acts as the Proton donor in catalysis. The Zn(2+) site is built by Cys-156, Cys-158, and Cys-161. Residue Glu-308 is the Nucleophile of the active site. Residues Trp-316 and 356 to 359 each bind substrate; that span reads EKYH.

This sequence belongs to the glycosyl hydrolase 42 family. As to quaternary structure, homodimer.

The enzyme catalyses Hydrolysis of terminal non-reducing beta-D-galactose residues in beta-D-galactosides.. No activity lost during treatment with 100 mM EDTA after 2 hours, and the addition of 1 mM MgCl(2), 1 mM CaCl(2) or 1 mM MnCl(2) has no effect. However, the enzyme activity is inhibited by Zn(2+), Cu(2+), Ni(2+) and Co(2+) to different extents. Addition of Na(+) or K(+) slightly stimulates the enzyme activity at low concentrations and the optimal concentration is 250 mM. A further increase of their concentration of ions above the optimum value results in a decrease in enzyme activity. The enzyme is still active even in the presence of Na(+) or K(+) at a concentration up to 5 M. Functionally, hydrolyzes lactose, o-nitrophenyl-beta-D-galactopyranoside (ONPG), p-nitrophenyl-beta-D-galactopyranoside (PNPG), 5-bromo-4-chloro-3-indolyl-beta-D-galactopyranoside (X-gal), o-nitrophenyl-beta-D-fucopyranoside, p-nitrophenyl-beta-D-mannoside, o-nitrophenyl-beta-D-glucoside, p-nitrophenyl-beta-D-xyloside, p-nitrophenyl-beta-D-cellobioside, p-nitrophenyl-beta-D-arabinoside, p-nitrophenyl-beta-D-lactoside, p-nitrophenyl-beta-D-galacturonide, p-nitrophenyl-beta-D-glucuronide and p-nitrophenyl-alpha-D-galactoside with highest level of activity with ONPG as substrate, intermediate level of activity with PNPG and lower levels of activity with all other chromogenic nitrophenyl analogs. Able to hydrolyze 34% of milk lactose after 60 minutes at 5 degrees Celsius. This Planococcus sp. (strain L4) protein is Beta-galactosidase BgaP.